The sequence spans 89 residues: Large ribosomal subunit protein bL27 (89 aa).

The segment at 1-26 (MAHKKGVGSSRNGRDSESKRLGVKEG) is disordered. Positions 12 to 26 (NGRDSESKRLGVKEG) are enriched in basic and acidic residues.

Belongs to the bacterial ribosomal protein bL27 family.

The chain is Large ribosomal subunit protein bL27 from Desulforamulus reducens (strain ATCC BAA-1160 / DSM 100696 / MI-1) (Desulfotomaculum reducens).